The chain runs to 334 residues: Anthranilate phosphoribosyltransferase (334 aa).

5-phospho-alpha-D-ribose 1-diphosphate-binding positions include Gly-79, 82–83 (GD), Ser-87, 89–92 (NIST), 107–115 (KAGNRSISS), and Ser-119. Gly-79 contacts anthranilate. Residue Ser-91 coordinates Mg(2+). Anthranilate is bound at residue Asn-110. Position 165 (Arg-165) interacts with anthranilate. 2 residues coordinate Mg(2+): Asp-224 and Glu-225.

This sequence belongs to the anthranilate phosphoribosyltransferase family. Homodimer. Mg(2+) serves as cofactor.

The catalysed reaction is N-(5-phospho-beta-D-ribosyl)anthranilate + diphosphate = 5-phospho-alpha-D-ribose 1-diphosphate + anthranilate. It functions in the pathway amino-acid biosynthesis; L-tryptophan biosynthesis; L-tryptophan from chorismate: step 2/5. Functionally, catalyzes the transfer of the phosphoribosyl group of 5-phosphorylribose-1-pyrophosphate (PRPP) to anthranilate to yield N-(5'-phosphoribosyl)-anthranilate (PRA). This is Anthranilate phosphoribosyltransferase from Streptococcus thermophilus (strain CNRZ 1066).